The following is a 30-amino-acid chain: Trypsin inhibitor 2 (30 aa).

Disulfide bonds link C2–C19, C9–C21, and C15–C27.

The protein belongs to the protease inhibitor I7 (squash-type serine protease inhibitor) family.

It localises to the secreted. Functionally, inhibits trypsin. The sequence is that of Trypsin inhibitor 2 from Ecballium elaterium (Squirting cucumber).